The primary structure comprises 232 residues: 2-C-methyl-D-erythritol 4-phosphate cytidylyltransferase (232 aa).

Belongs to the IspD/TarI cytidylyltransferase family. IspD subfamily.

The catalysed reaction is 2-C-methyl-D-erythritol 4-phosphate + CTP + H(+) = 4-CDP-2-C-methyl-D-erythritol + diphosphate. It functions in the pathway isoprenoid biosynthesis; isopentenyl diphosphate biosynthesis via DXP pathway; isopentenyl diphosphate from 1-deoxy-D-xylulose 5-phosphate: step 2/6. Its function is as follows. Catalyzes the formation of 4-diphosphocytidyl-2-C-methyl-D-erythritol from CTP and 2-C-methyl-D-erythritol 4-phosphate (MEP). This Shewanella frigidimarina (strain NCIMB 400) protein is 2-C-methyl-D-erythritol 4-phosphate cytidylyltransferase.